Here is a 324-residue protein sequence, read N- to C-terminus: MRSVSEEPVPLHEEFIYCCGAATHVLKCGPWKDLSKDESKNLPRLLFMIIPGNPGLAGYYRTFIKALYCGLNQQYPVWVVSHAGHCKPPSGMEMIEDTDIKELEDVFGLNGQVEHKLNFLKKNVSKDIKLVLIAHSIGCYITLEMMKRASELQVLRSVLLFPTIERMAQSPQGKLMTPLLCKLRYALYMPVYLLSFLPEGVKASLVRFALRGMKTCDESSITTSVNLFSVDCIANILYMASQEMMKVVERDSTTIKQNLKKLIFYYGTGDSWCPQNYYDEIKMDFPDGDIRLCEKGLRHAFVLDASKEMAAMITDWLRDDLTKL.

Serine 136 (nucleophile) is an active-site residue. Catalysis depends on charge relay system residues aspartate 270 and histidine 299.

The protein belongs to the AB hydrolase superfamily. LDAH family.

The protein localises to the lipid droplet. It is found in the endoplasmic reticulum. The enzyme catalyses a cholesterol ester + H2O = cholesterol + a fatty acid + H(+). In terms of biological role, probable serine lipid hydrolase associated with lipid droplets. Has low cholesterol esterase activity. Appears to lack triglyceride lipase activity. Involved in cholesterol and triglyceride homeostasis; stimulates cellular triglyceride accumulation and cellular cholesterol release. The chain is Lipid droplet-associated hydrolase from Gallus gallus (Chicken).